The primary structure comprises 374 residues: UDP-N-acetylglucosamine--N-acetylmuramyl-(pentapeptide) pyrophosphoryl-undecaprenol N-acetylglucosamine transferase (374 aa).

Residues T13–G15, N124, R165, S193, and Q294 each bind UDP-N-acetyl-alpha-D-glucosamine.

This sequence belongs to the glycosyltransferase 28 family. MurG subfamily.

The protein resides in the cell inner membrane. It catalyses the reaction di-trans,octa-cis-undecaprenyl diphospho-N-acetyl-alpha-D-muramoyl-L-alanyl-D-glutamyl-meso-2,6-diaminopimeloyl-D-alanyl-D-alanine + UDP-N-acetyl-alpha-D-glucosamine = di-trans,octa-cis-undecaprenyl diphospho-[N-acetyl-alpha-D-glucosaminyl-(1-&gt;4)]-N-acetyl-alpha-D-muramoyl-L-alanyl-D-glutamyl-meso-2,6-diaminopimeloyl-D-alanyl-D-alanine + UDP + H(+). The protein operates within cell wall biogenesis; peptidoglycan biosynthesis. In terms of biological role, cell wall formation. Catalyzes the transfer of a GlcNAc subunit on undecaprenyl-pyrophosphoryl-MurNAc-pentapeptide (lipid intermediate I) to form undecaprenyl-pyrophosphoryl-MurNAc-(pentapeptide)GlcNAc (lipid intermediate II). The protein is UDP-N-acetylglucosamine--N-acetylmuramyl-(pentapeptide) pyrophosphoryl-undecaprenol N-acetylglucosamine transferase of Rhizobium leguminosarum bv. trifolii (strain WSM2304).